A 121-amino-acid chain; its full sequence is Chromosome transmission fidelity protein 8 homolog (121 aa).

This sequence belongs to the CTF8 family. In terms of assembly, component of the CTF18-RFC complex, which consists of CTF18, CTF8, DSCC1, RFC2, RFC3, RFC4 and RFC5. The CTF18-RFC complex does not interact with the Rad9/Rad1/Hus1 complex. The CTF18-RFC complex interacts with POLH. CTF18/CTF8/DSCC1 associate with PCNA. CTF8 exists as a dimer with DSCC1.

Its subcellular location is the nucleus. Functionally, chromosome cohesion factor involved in sister chromatid cohesion and fidelity of chromosome transmission. Component of one of the cell nuclear antigen loader complexes, CTF18-replication factor C (CTF18-RFC), which consists of CTF18, CTF8, DSCC1, RFC2, RFC3, RFC4 and RFC5. The CTF18-RFC complex binds to single-stranded and primed DNAs and has weak ATPase activity that is stimulated the presence of primed DNA, replication protein A (RPA) and proliferating cell nuclear antigen (PCNA). The CTF18-RFC complex catalyzes the ATP-dependent loading of PCNA onto primed and gapped DNA. It also interacts with and stimulates POLH, which is suggestive of a protein network that coordinates DNA repair, recombination and chromosome cohesion reactions with replication fork progression. The protein is Chromosome transmission fidelity protein 8 homolog of Rattus norvegicus (Rat).